Consider the following 597-residue polypeptide: Elongation factor 4 (597 aa).

A tr-type G domain is found at Lys2 to Glu184. GTP-binding positions include Asp14–Thr19 and Asn131–Asp134.

It belongs to the TRAFAC class translation factor GTPase superfamily. Classic translation factor GTPase family. LepA subfamily.

It localises to the cell inner membrane. It catalyses the reaction GTP + H2O = GDP + phosphate + H(+). Its function is as follows. Required for accurate and efficient protein synthesis under certain stress conditions. May act as a fidelity factor of the translation reaction, by catalyzing a one-codon backward translocation of tRNAs on improperly translocated ribosomes. Back-translocation proceeds from a post-translocation (POST) complex to a pre-translocation (PRE) complex, thus giving elongation factor G a second chance to translocate the tRNAs correctly. Binds to ribosomes in a GTP-dependent manner. The sequence is that of Elongation factor 4 from Vibrio campbellii (strain ATCC BAA-1116).